A 146-amino-acid chain; its full sequence is Acidic phospholipase A2 2 (146 aa).

Positions 1-21 (MNPAHLLILAAVCVSSLGASS) are cleaved as a signal peptide. Residues 22–27 (NRPMPL) constitute a propeptide that is removed on maturation. Disulfide bonds link Cys-38–Cys-98, Cys-53–Cys-145, Cys-55–Cys-71, Cys-70–Cys-126, Cys-77–Cys-119, Cys-87–Cys-112, and Cys-105–Cys-117. The Ca(2+) site is built by Tyr-54, Gly-56, and Gly-58. His-74 is an active-site residue. Asp-75 contributes to the Ca(2+) binding site. Asp-120 is an active-site residue.

Belongs to the phospholipase A2 family. Group I subfamily. D49 sub-subfamily. It depends on Ca(2+) as a cofactor. In terms of tissue distribution, expressed by the venom gland.

The protein localises to the secreted. It carries out the reaction a 1,2-diacyl-sn-glycero-3-phosphocholine + H2O = a 1-acyl-sn-glycero-3-phosphocholine + a fatty acid + H(+). In terms of biological role, PLA2 catalyzes the calcium-dependent hydrolysis of the 2-acyl groups in 3-sn-phosphoglycerides. In Naja kaouthia (Monocled cobra), this protein is Acidic phospholipase A2 2.